We begin with the raw amino-acid sequence, 397 residues long: Elongation factor Tu 2 (397 aa).

A tr-type G domain is found at 10–206; sequence KPHVNIGTIG…AIDTWIPEPV (197 aa). The tract at residues 19 to 26 is G1; that stretch reads GHVDHGKT. A GTP-binding site is contributed by 19–26; it reads GHVDHGKT. Thr-26 lines the Mg(2+) pocket. The G2 stretch occupies residues 61-65; that stretch reads GITIS. Residues 82-85 form a G3 region; it reads DCPG. Residues 82–86 and 137–140 contribute to the GTP site; these read DCPGH and NKCD. The G4 stretch occupies residues 137-140; sequence NKCD. Residues 175-177 form a G5 region; that stretch reads SAL.

This sequence belongs to the TRAFAC class translation factor GTPase superfamily. Classic translation factor GTPase family. EF-Tu/EF-1A subfamily. Monomer.

It is found in the cytoplasm. The catalysed reaction is GTP + H2O = GDP + phosphate + H(+). Functionally, GTP hydrolase that promotes the GTP-dependent binding of aminoacyl-tRNA to the A-site of ribosomes during protein biosynthesis. The sequence is that of Elongation factor Tu 2 from Alkaliphilus metalliredigens (strain QYMF).